The sequence spans 236 residues: Orotidine 5'-phosphate decarboxylase (236 aa).

Substrate contacts are provided by residues Asp14, Lys36, 63-72, Thr122, Arg183, Gln192, Gly212, and Arg213; that span reads DLKYHDIPNT. Lys65 (proton donor) is an active-site residue.

It belongs to the OMP decarboxylase family. Type 1 subfamily. As to quaternary structure, homodimer.

It carries out the reaction orotidine 5'-phosphate + H(+) = UMP + CO2. Its pathway is pyrimidine metabolism; UMP biosynthesis via de novo pathway; UMP from orotate: step 2/2. Functionally, catalyzes the decarboxylation of orotidine 5'-monophosphate (OMP) to uridine 5'-monophosphate (UMP). The polypeptide is Orotidine 5'-phosphate decarboxylase (Halorhodospira halophila (strain DSM 244 / SL1) (Ectothiorhodospira halophila (strain DSM 244 / SL1))).